The sequence spans 235 residues: Sugar fermentation stimulation protein homolog (235 aa).

It belongs to the SfsA family.

This is Sugar fermentation stimulation protein homolog from Aliivibrio fischeri (strain MJ11) (Vibrio fischeri).